A 211-amino-acid polypeptide reads, in one-letter code: Glycerol-3-phosphate acyltransferase (211 aa).

5 helical membrane passes run 8–28, 84–104, 116–136, 145–165, and 170–190; these read YCLALLGGYLLGSIPFGLILT, LALPAGIAAVIGHLFPVWLGF, VLLATAWPVGLICCALWFAVA, AALCAFAFAPLLALAVGGMGL, and LAQSHWQAAAAFMLIAVLVFL.

This sequence belongs to the PlsY family. As to quaternary structure, probably interacts with PlsX.

The protein localises to the cell inner membrane. The catalysed reaction is an acyl phosphate + sn-glycerol 3-phosphate = a 1-acyl-sn-glycero-3-phosphate + phosphate. Its pathway is lipid metabolism; phospholipid metabolism. Catalyzes the transfer of an acyl group from acyl-phosphate (acyl-PO(4)) to glycerol-3-phosphate (G3P) to form lysophosphatidic acid (LPA). This enzyme utilizes acyl-phosphate as fatty acyl donor, but not acyl-CoA or acyl-ACP. This chain is Glycerol-3-phosphate acyltransferase, found in Granulibacter bethesdensis (strain ATCC BAA-1260 / CGDNIH1).